The chain runs to 316 residues: tRNA-cytidine(32) 2-sulfurtransferase (316 aa).

Residues 1–31 (MGAVIDDSMPGPGADATGTGPSDARTERETR) form a disordered region. Residues 10 to 21 (PGPGADATGTGP) show a composition bias toward low complexity. A PP-loop motif motif is present at residues 62–67 (SGGKDS). 3 residues coordinate [4Fe-4S] cluster: Cys137, Cys140, and Cys228.

The protein belongs to the TtcA family. As to quaternary structure, homodimer. Requires Mg(2+) as cofactor. [4Fe-4S] cluster is required as a cofactor.

It is found in the cytoplasm. It carries out the reaction cytidine(32) in tRNA + S-sulfanyl-L-cysteinyl-[cysteine desulfurase] + AH2 + ATP = 2-thiocytidine(32) in tRNA + L-cysteinyl-[cysteine desulfurase] + A + AMP + diphosphate + H(+). Its pathway is tRNA modification. Its function is as follows. Catalyzes the ATP-dependent 2-thiolation of cytidine in position 32 of tRNA, to form 2-thiocytidine (s(2)C32). The sulfur atoms are provided by the cysteine/cysteine desulfurase (IscS) system. The sequence is that of tRNA-cytidine(32) 2-sulfurtransferase from Verminephrobacter eiseniae (strain EF01-2).